The primary structure comprises 35 residues: Cytochrome b6-f complex subunit 7 (35 aa).

Residues 9–27 (AGLSIVLTLVGVALGYGIL) form a helical membrane-spanning segment.

The protein belongs to the PetM family. In terms of assembly, the 4 large subunits of the cytochrome b6-f complex are cytochrome b6, subunit IV (17 kDa polypeptide, PetD), cytochrome f and the Rieske protein, while the 4 small subunits are PetG, PetL, PetM and PetN. The complex functions as a dimer.

It is found in the cellular thylakoid membrane. Functionally, component of the cytochrome b6-f complex, which mediates electron transfer between photosystem II (PSII) and photosystem I (PSI), cyclic electron flow around PSI, and state transitions. This is Cytochrome b6-f complex subunit 7 from Synechococcus sp. (strain JA-3-3Ab) (Cyanobacteria bacterium Yellowstone A-Prime).